A 511-amino-acid chain; its full sequence is Glucans biosynthesis protein G (511 aa).

A signal peptide spans 1–22; sequence MMKMRWLSAAVMLTLYTSSSWA.

This sequence belongs to the OpgD/OpgG family.

The protein localises to the periplasm. Its pathway is glycan metabolism; osmoregulated periplasmic glucan (OPG) biosynthesis. Involved in the biosynthesis of osmoregulated periplasmic glucans (OPGs). The sequence is that of Glucans biosynthesis protein G from Escherichia coli (strain K12 / MC4100 / BW2952).